A 342-amino-acid polypeptide reads, in one-letter code: S-adenosylmethionine:tRNA ribosyltransferase-isomerase (342 aa).

Belongs to the QueA family. As to quaternary structure, monomer.

The protein localises to the cytoplasm. The catalysed reaction is 7-aminomethyl-7-carbaguanosine(34) in tRNA + S-adenosyl-L-methionine = epoxyqueuosine(34) in tRNA + adenine + L-methionine + 2 H(+). It participates in tRNA modification; tRNA-queuosine biosynthesis. In terms of biological role, transfers and isomerizes the ribose moiety from AdoMet to the 7-aminomethyl group of 7-deazaguanine (preQ1-tRNA) to give epoxyqueuosine (oQ-tRNA). The polypeptide is S-adenosylmethionine:tRNA ribosyltransferase-isomerase (Geobacillus sp. (strain WCH70)).